Reading from the N-terminus, the 416-residue chain is MTYIDTLGQQAKVASRQIAKLSTAAKNDLLNQVAKALVAESDYIITENAKDMANASENGISKIMQDRLLLTEDRIAGIAEGVRQVADLQDPIGQVVRGYTNLDGLKIVQKRVPMGVIAMIFESRPNVSIDAFSLAFKTNNAIILRGGRDAINSNKALVTVARKALKNAGITADAVQFVEDTSHEVAEELMVATKYVDLLIPRGGARLIQTVKEKAKVPVIETGVGNCHIYVDKYANLDMATQIVINAKTQRPSVCNAAESLVVHADIVEEFLPNLEKAILKIQSVEFRADERALKLMEKAVPASPEDFATEFLDYIMSVKVVDSLDEAINWINTYTTSHSEAIVTQDISRAEQFQDDVDAAAVYVNASTRFTDGFVFGLGAEIGISTQKMHARGPMGLEALTSTKFYINGQGQIRE.

The protein belongs to the gamma-glutamyl phosphate reductase family.

The protein resides in the cytoplasm. It carries out the reaction L-glutamate 5-semialdehyde + phosphate + NADP(+) = L-glutamyl 5-phosphate + NADPH + H(+). It functions in the pathway amino-acid biosynthesis; L-proline biosynthesis; L-glutamate 5-semialdehyde from L-glutamate: step 2/2. Functionally, catalyzes the NADPH-dependent reduction of L-glutamate 5-phosphate into L-glutamate 5-semialdehyde and phosphate. The product spontaneously undergoes cyclization to form 1-pyrroline-5-carboxylate. This Streptococcus thermophilus (strain CNRZ 1066) protein is Gamma-glutamyl phosphate reductase.